Reading from the N-terminus, the 357-residue chain is RNA-binding protein 43 (357 aa).

The 90-residue stretch at 15–104 folds into the RRM domain; the sequence is RTVVVAGLPV…VSLRVSHFGD (90 aa).

The protein is RNA-binding protein 43 (RBM43) of Homo sapiens (Human).